Consider the following 468-residue polypeptide: MIQVLGTSSGSGKTTIAMALSRIFFRSGYRVAPFKAVNMSLNSVIVEGEYEIARAQWLQAKAANTEPTRFMNPILLKPEGMGASQVIMLGKSLGKKTIPEYYEFIMNDGKRVIREAIDRISDDYDLIIAEGAGSPAEINLLDRDMANIYVSSIYNTPAILVGDIDRGGVFASIYGTLSLMPRPDLVRWIMINKMRGDASLLEPGLKKLENLTGKRVIGVVPYSENRLPGEDSFDYDHPRARGSKITIVRYPFMENYSDLDPLVYTSTGYNYVTAENASDLSDADLIVLPGSKNVFADLEYMRKNGIDKIIIENAGRAKILGICGGYQMLGQRITMGEISADGLGLLRAKTNYERTKTTRSVRYRVDNTLMSGTWEEGYEIHYGAVISLGGERMNETDKGPEGNVDANRLVFGTNIHGILANRSVFRFMTGRDIGEPEEYLRSEIDRFADVVKSSIDVADLIEYASSRE.

The region spanning 242–424 (GSKITIVRYP…IHGILANRSV (183 aa)) is the GATase cobBQ-type domain. Catalysis depends on Cys323, which acts as the Nucleophile. His416 is an active-site residue.

This sequence belongs to the CobB/CobQ family. CobQ subfamily.

It participates in cofactor biosynthesis; adenosylcobalamin biosynthesis. Its function is as follows. Catalyzes amidations at positions B, D, E, and G on adenosylcobyrinic A,C-diamide. NH(2) groups are provided by glutamine, and one molecule of ATP is hydrogenolyzed for each amidation. This is Probable cobyric acid synthase (cobQ) from Thermoplasma acidophilum (strain ATCC 25905 / DSM 1728 / JCM 9062 / NBRC 15155 / AMRC-C165).